The primary structure comprises 201 residues: Pectinesterase inhibitor 7 (201 aa).

Residues Met-1–Ala-24 form the signal peptide. 2 disulfide bridges follow: Cys-42–Cys-51 and Cys-108–Cys-159.

It belongs to the PMEI family. In terms of assembly, binds reversibly to PME3 to inhibit its activity; the stability of the PME3-PMEI7 complex and the inhibition of the pectin methylesterase (PME) activity is pH-dependent, based on protonation status of amino-acids at the complex interface. Accumulates in etiolated hypocotyls (at protein level).

The protein localises to the secreted. It is found in the extracellular space. Its subcellular location is the apoplast. The protein resides in the cell wall. Functionally, pectin methylesterase (PME) inhibitor that can target PME3 in a pH-dependent manner, mainly in slightly acidic conditions (pH 6.0 and 5.0) but not at pH 7.0; this processus relies on changes in the protonation of amino acids involved in intermolecular and intramolecular interactions. Regulates homogalacturonan methylesterification during plant development. In Arabidopsis thaliana (Mouse-ear cress), this protein is Pectinesterase inhibitor 7.